A 445-amino-acid polypeptide reads, in one-letter code: 6-phosphogluconate dehydrogenase, decarboxylating (445 aa).

NADP(+) is bound by residues 1–4, 22–24, 63–65, and asparagine 91; these read AVMG, NRS, and VQA. Residues asparagine 91 and 117-119 each bind substrate; that span reads SGG. Lysine 172 serves as the catalytic Proton acceptor. 175–176 lines the substrate pocket; that stretch reads HN. Glutamate 179 serves as the catalytic Proton donor. Residues tyrosine 180, lysine 249, arginine 276, arginine 434, and histidine 440 each coordinate substrate.

It belongs to the 6-phosphogluconate dehydrogenase family. As to quaternary structure, homodimer.

It carries out the reaction 6-phospho-D-gluconate + NADP(+) = D-ribulose 5-phosphate + CO2 + NADPH. The protein operates within carbohydrate degradation; pentose phosphate pathway; D-ribulose 5-phosphate from D-glucose 6-phosphate (oxidative stage): step 3/3. Catalyzes the oxidative decarboxylation of 6-phosphogluconate to ribulose 5-phosphate and CO(2), with concomitant reduction of NADP to NADPH. The sequence is that of 6-phosphogluconate dehydrogenase, decarboxylating (gnd) from Pseudescherichia vulneris (Escherichia vulneris).